The sequence spans 211 residues: Nucleoside triphosphate pyrophosphatase (211 aa).

D75 functions as the Proton acceptor in the catalytic mechanism.

It belongs to the Maf family. A divalent metal cation serves as cofactor.

Its subcellular location is the cytoplasm. It catalyses the reaction a ribonucleoside 5'-triphosphate + H2O = a ribonucleoside 5'-phosphate + diphosphate + H(+). The enzyme catalyses a 2'-deoxyribonucleoside 5'-triphosphate + H2O = a 2'-deoxyribonucleoside 5'-phosphate + diphosphate + H(+). Nucleoside triphosphate pyrophosphatase. May have a dual role in cell division arrest and in preventing the incorporation of modified nucleotides into cellular nucleic acids. This Prochlorococcus marinus (strain NATL1A) protein is Nucleoside triphosphate pyrophosphatase.